The sequence spans 25 residues: Glucomannokinase (25 aa).

The protein belongs to the ROK (NagC/XylR) family. In terms of assembly, homodimer.

The enzyme catalyses D-glucose + ATP = D-glucose 6-phosphate + ADP + H(+). The catalysed reaction is D-mannose + ATP = D-mannose 6-phosphate + ADP + H(+). It participates in carbohydrate degradation; glycolysis; D-glyceraldehyde 3-phosphate and glycerone phosphate from D-glucose: step 1/4. The protein operates within carbohydrate metabolism; mannose metabolism. Competitively inhibited by 2-deoxy-glucose. The enzyme has great affinity for glucose and mannose. The protein is Glucomannokinase of Segatella bryantii (Prevotella bryantii).